We begin with the raw amino-acid sequence, 390 residues long: Chorismate synthase 1 (390 aa).

2 residues coordinate NADP(+): R39 and R45. A disordered region spans residues 95 to 117; sequence EQEEKEMKRKVTKPRPGHADLNG. Residues 132–134, 253–254, G298, 313–317, and R339 each bind FMN; these read RSS, NA, and KPIPT.

Belongs to the chorismate synthase family. As to quaternary structure, homotetramer. FMNH2 serves as cofactor.

The enzyme catalyses 5-O-(1-carboxyvinyl)-3-phosphoshikimate = chorismate + phosphate. The protein operates within metabolic intermediate biosynthesis; chorismate biosynthesis; chorismate from D-erythrose 4-phosphate and phosphoenolpyruvate: step 7/7. Catalyzes the anti-1,4-elimination of the C-3 phosphate and the C-6 proR hydrogen from 5-enolpyruvylshikimate-3-phosphate (EPSP) to yield chorismate, which is the branch point compound that serves as the starting substrate for the three terminal pathways of aromatic amino acid biosynthesis. This reaction introduces a second double bond into the aromatic ring system. This is Chorismate synthase 1 from Bacillus thuringiensis (strain Al Hakam).